Reading from the N-terminus, the 484-residue chain is Ribosomal RNA small subunit methyltransferase F (484 aa).

Residues 126 to 132, Glu150, Asp177, and Asp195 each bind S-adenosyl-L-methionine; that span reads AAAPGSK. Residue Cys248 is the Nucleophile of the active site.

This sequence belongs to the class I-like SAM-binding methyltransferase superfamily. RsmB/NOP family.

The protein resides in the cytoplasm. It carries out the reaction cytidine(1407) in 16S rRNA + S-adenosyl-L-methionine = 5-methylcytidine(1407) in 16S rRNA + S-adenosyl-L-homocysteine + H(+). Specifically methylates the cytosine at position 1407 (m5C1407) of 16S rRNA. The protein is Ribosomal RNA small subunit methyltransferase F of Pectobacterium carotovorum subsp. carotovorum (strain PC1).